Reading from the N-terminus, the 191-residue chain is GTP cyclohydrolase 1 (191 aa).

The Zn(2+) site is built by C80, H83, and C151.

This sequence belongs to the GTP cyclohydrolase I family. In terms of assembly, toroid-shaped homodecamer, composed of two pentamers of five dimers.

The enzyme catalyses GTP + H2O = 7,8-dihydroneopterin 3'-triphosphate + formate + H(+). It participates in cofactor biosynthesis; 7,8-dihydroneopterin triphosphate biosynthesis; 7,8-dihydroneopterin triphosphate from GTP: step 1/1. The protein is GTP cyclohydrolase 1 of Leifsonia xyli subsp. xyli (strain CTCB07).